Reading from the N-terminus, the 142-residue chain is Large ribosomal subunit protein uL11 (142 aa).

This sequence belongs to the universal ribosomal protein uL11 family. Part of the ribosomal stalk of the 50S ribosomal subunit. Interacts with L10 and the large rRNA to form the base of the stalk. L10 forms an elongated spine to which L12 dimers bind in a sequential fashion forming a multimeric L10(L12)X complex. One or more lysine residues are methylated.

Functionally, forms part of the ribosomal stalk which helps the ribosome interact with GTP-bound translation factors. The sequence is that of Large ribosomal subunit protein uL11 from Leptospira borgpetersenii serovar Hardjo-bovis (strain JB197).